The chain runs to 230 residues: Protein CWC15 homolog B (230 aa).

Residues 1–126 form a disordered region; the sequence is MTTAARPTFE…DEDSDDDTAA (126 aa). Positions 22–34 are enriched in polar residues; sequence DLSQLSKQYSSRD. The span at 52–84 shows a compositional bias: basic and acidic residues; sequence EEVRSRDFRRELEERERVAVRDKNRDRPTREHT. The span at 102 to 124 shows a compositional bias: acidic residues; the sequence is DADDPLTDEDADEDSDEDSDDDT. Residues 121-165 adopt a coiled-coil conformation; that stretch reads DDDTAALLAELEKIKKERAEEQVRKELEQKAEEERIRMENILSGN.

The protein belongs to the CWC15 family. Identified in the spliceosome C complex. Component of the minor spliceosome, which splices U12-type introns.

The protein resides in the nucleus. Functionally, involved in pre-mRNA splicing as component of the spliceosome. In Xenopus laevis (African clawed frog), this protein is Protein CWC15 homolog B (cwc15-b).